The primary structure comprises 651 residues: Translation factor GUF1 homolog, mitochondrial (651 aa).

Residues 1–26 constitute a mitochondrion transit peptide; it reads MAVTRAAAPMVGNCSSAMLIIGRRYF. In terms of domain architecture, tr-type G spans 51–228; it reads KKIRNFGIVA…AVVERLPPPK (178 aa). GTP-binding positions include 60–67, 121–125, and 175–178; these read AHVDHGKS, DTPGH, and NKVD.

This sequence belongs to the TRAFAC class translation factor GTPase superfamily. Classic translation factor GTPase family. LepA subfamily.

It is found in the mitochondrion inner membrane. The catalysed reaction is GTP + H2O = GDP + phosphate + H(+). Promotes mitochondrial protein synthesis. May act as a fidelity factor of the translation reaction, by catalyzing a one-codon backward translocation of tRNAs on improperly translocated ribosomes. Binds to mitochondrial ribosomes in a GTP-dependent manner. This is Translation factor GUF1 homolog, mitochondrial from Brugia malayi (Filarial nematode worm).